A 2429-amino-acid polypeptide reads, in one-letter code: Reducing polyketide synthase ppsB (2429 aa).

The 439-residue stretch at 4–442 (DERVAIIGTG…GTNAHAILES (439 aa)) folds into the Ketosynthase family 3 (KS3) domain. Residues Cys177, His317, and His362 each act as for beta-ketoacyl synthase activity in the active site. Residues 558 to 873 (VFTGQGAQWP…PYIGLAHRGE (316 aa)) are malonyl-CoA:ACP transacylase (MAT) domain. Ser652 serves as the catalytic For acyl/malonyl transferase activity. The segment at 945–1075 (HPLLGVLSSE…GRVILALGEA (131 aa)) is N-terminal hotdog fold. The interval 945-1227 (HPLLGVLSSE…QLEGIHLTLS (283 aa)) is product template (PT) domain. One can recognise a PKS/mFAS DH domain in the interval 945-1233 (HPLLGVLSSE…LTLSKPKNSS (289 aa)). The tract at residues 1090–1233 (SYPMNVDKFY…LTLSKPKNSS (144 aa)) is C-terminal hotdog fold. The methyltransferase (CMeT) domain stretch occupies residues 1409–2158 (LEVGAGTGSA…ISDLYDQLTS (750 aa)). In terms of domain architecture, Carrier spans 2350–2425 (EIILQLFKEK…SMVDEVVKRR (76 aa)). Ser2385 bears the O-(pantetheine 4'-phosphoryl)serine mark.

The protein operates within secondary metabolite biosynthesis. Functionally, reducing polyketide synthase; part of the gene cluster that mediates the biosynthesis of 2,4'-dihydroxy-3'-methoxypropiophenone. The first step of the pathway is the conversion of acetate into acetyl-CoA by the acyl-CoA ligase ppsA. Acetyl-CoA is then used as a starter unit by the polyketide synthase ppsB and condensed with 4 malonyl-CoA unit to produce the pentaketide backbone. During polyketide extension, the polykedite chain is probably reduced and dehydrated by the KR and PT domains, respectively. O-methylation seems to be catalyzed by an unknown methyltransferase rather than by the CMeT domain of ppsB. Two hydroxylations and one further decarboxylation step catalyzed by yet unknown enzymes are then required to yield 4'-hydroxy-3'-methoxypropiophenone. PpsC functions as a carrier protein to transport 4'-hydroxy-3'-methoxypropiophenone to a specific cell compartment in which 4'-hydroxy-3'-methoxypropiophenone is hydroxylated to 2,4'-dihydroxy-3'-methoxypropiophenone by a still to be identified enzyme. In Aspergillus oryzae (strain ATCC 42149 / RIB 40) (Yellow koji mold), this protein is Reducing polyketide synthase ppsB.